Reading from the N-terminus, the 562-residue chain is Thermosome subunit alpha (562 aa).

2 disordered regions span residues Met-1–Glu-23 and Gly-526–Gly-551. The span at Gly-537–Gly-551 shows a compositional bias: gly residues.

Belongs to the TCP-1 chaperonin family. Forms an oligomeric complex of eight-membered rings.

Functionally, molecular chaperone; binds unfolded polypeptides in vitro, and has a weak ATPase activity. This chain is Thermosome subunit alpha (thsA), found in Halobacterium salinarum (strain ATCC 700922 / JCM 11081 / NRC-1) (Halobacterium halobium).